A 380-amino-acid polypeptide reads, in one-letter code: Chaperone protein DnaJ (380 aa).

Positions 5–72 (DYYDTLGVPK…QKRAAYDQYG (68 aa)) constitute a J domain. The disordered stretch occupies residues 21–47 (IKKAYRKLAMKHHPDRNQGDTSKVSED). Over residues 24 to 34 (AYRKLAMKHHP) the composition is skewed to basic residues. Residues 35–47 (DRNQGDTSKVSED) show a composition bias toward basic and acidic residues. The CR-type zinc finger occupies 139 to 217 (GKEAQIRIPS…CHGVGKTKNN (79 aa)). Residues Cys-152, Cys-155, Cys-169, Cys-172, Cys-191, Cys-194, Cys-205, and Cys-208 each contribute to the Zn(2+) site. CXXCXGXG motif repeat units lie at residues 152–159 (CGICHGTG), 169–176 (CTTCHGHG), 191–198 (CPQCKGSG), and 205–212 (CVACHGVG).

Belongs to the DnaJ family. Homodimer. Zn(2+) is required as a cofactor.

The protein localises to the cytoplasm. Its function is as follows. Participates actively in the response to hyperosmotic and heat shock by preventing the aggregation of stress-denatured proteins and by disaggregating proteins, also in an autonomous, DnaK-independent fashion. Unfolded proteins bind initially to DnaJ; upon interaction with the DnaJ-bound protein, DnaK hydrolyzes its bound ATP, resulting in the formation of a stable complex. GrpE releases ADP from DnaK; ATP binding to DnaK triggers the release of the substrate protein, thus completing the reaction cycle. Several rounds of ATP-dependent interactions between DnaJ, DnaK and GrpE are required for fully efficient folding. Also involved, together with DnaK and GrpE, in the DNA replication of plasmids through activation of initiation proteins. The protein is Chaperone protein DnaJ of Polaromonas naphthalenivorans (strain CJ2).